A 435-amino-acid chain; its full sequence is Methylenetetrahydrofolate--tRNA-(uracil-5-)-methyltransferase TrmFO (435 aa).

Residue 10-15 (GAGLAG) coordinates FAD.

The protein belongs to the MnmG family. TrmFO subfamily. In terms of assembly, homodimer. Requires FAD as cofactor.

Its subcellular location is the cytoplasm. The catalysed reaction is uridine(54) in tRNA + (6R)-5,10-methylene-5,6,7,8-tetrahydrofolate + NADH + H(+) = 5-methyluridine(54) in tRNA + (6S)-5,6,7,8-tetrahydrofolate + NAD(+). The enzyme catalyses uridine(54) in tRNA + (6R)-5,10-methylene-5,6,7,8-tetrahydrofolate + NADPH + H(+) = 5-methyluridine(54) in tRNA + (6S)-5,6,7,8-tetrahydrofolate + NADP(+). In terms of biological role, catalyzes the folate-dependent formation of 5-methyl-uridine at position 54 (M-5-U54) in all tRNAs. In Bacillus subtilis (strain 168), this protein is Methylenetetrahydrofolate--tRNA-(uracil-5-)-methyltransferase TrmFO.